The following is an 84-amino-acid chain: Dolichol phosphate-mannose biosynthesis regulatory protein (84 aa).

Helical transmembrane passes span 11-31 (FGLVAVSLIIFTYYTTWVILL) and 49-69 (YAVLIPLATGLLLLLFVGLFI).

The protein belongs to the DPM2 family. As to quaternary structure, component of the dolichol-phosphate mannose (DPM) synthase complex composed of DPM1, DPM2 and DPM3; in the complex interacts directly with DPM3. Component of the glycosylphosphatidylinositol-N-acetylglucosaminyltransferase (GPI-GnT) complex composed at least by PIGA, PIGC, PIGH, PIGP, PIGQ, PIGY and DPM2. Interacts with PIGA, PIGC and PIGQ.

It is found in the endoplasmic reticulum membrane. The protein operates within protein modification; protein glycosylation. Its function is as follows. Regulates the biosynthesis of dolichol phosphate-mannose. Regulatory subunit of the dolichol-phosphate mannose (DPM) synthase complex; essential for the ER localization and stable expression of DPM1. Part of the glycosylphosphatidylinositol-N-acetylglucosaminyltransferase (GPI-GnT) complex that catalyzes the transfer of N-acetylglucosamine from UDP-N-acetylglucosamine to phosphatidylinositol and participates in the first step of GPI biosynthesis. May act by regulating the GPI-GNT complex. The chain is Dolichol phosphate-mannose biosynthesis regulatory protein from Cricetulus griseus (Chinese hamster).